The following is a 188-amino-acid chain: Probable DNA-directed RNA polymerase subunit delta (188 aa).

The 70-residue stretch at 14–83 (LSMIEVARAI…GENKWGLRSW (70 aa)) folds into the HTH HARE-type domain. The segment at 119–188 (EDAIDYSADD…EDEEDEDEEE (70 aa)) is disordered.

The protein belongs to the RpoE family. RNAP is composed of a core of 2 alpha, a beta and a beta' subunits. The core is associated with a delta subunit and one of several sigma factors.

Its function is as follows. Participates in both the initiation and recycling phases of transcription. In the presence of the delta subunit, RNAP displays an increased specificity of transcription, a decreased affinity for nucleic acids, and an increased efficiency of RNA synthesis because of enhanced recycling. This chain is Probable DNA-directed RNA polymerase subunit delta, found in Streptococcus equi subsp. zooepidemicus (strain H70).